The following is a 209-amino-acid chain: Uridine kinase (209 aa).

Glycine 16 to threonine 23 is an ATP binding site.

Belongs to the uridine kinase family.

The protein localises to the cytoplasm. It carries out the reaction uridine + ATP = UMP + ADP + H(+). The catalysed reaction is cytidine + ATP = CMP + ADP + H(+). Its pathway is pyrimidine metabolism; CTP biosynthesis via salvage pathway; CTP from cytidine: step 1/3. The protein operates within pyrimidine metabolism; UMP biosynthesis via salvage pathway; UMP from uridine: step 1/1. This is Uridine kinase from Lactiplantibacillus plantarum (strain ATCC BAA-793 / NCIMB 8826 / WCFS1) (Lactobacillus plantarum).